A 78-amino-acid chain; its full sequence is D-alanyl carrier protein (78 aa).

A Carrier domain is found at Met-1–Arg-78. Ser-36 is subject to O-(pantetheine 4'-phosphoryl)serine.

It belongs to the DltC family. In terms of processing, 4'-phosphopantetheine is transferred from CoA to a specific serine of apo-DCP.

The protein localises to the cytoplasm. It functions in the pathway cell wall biogenesis; lipoteichoic acid biosynthesis. Functionally, carrier protein involved in the D-alanylation of lipoteichoic acid (LTA). The loading of thioester-linked D-alanine onto DltC is catalyzed by D-alanine--D-alanyl carrier protein ligase DltA. The DltC-carried D-alanyl group is further transferred to cell membrane phosphatidylglycerol (PG) by forming an ester bond, probably catalyzed by DltD. D-alanylation of LTA plays an important role in modulating the properties of the cell wall in Gram-positive bacteria, influencing the net charge of the cell wall. In Staphylococcus aureus (strain Mu50 / ATCC 700699), this protein is D-alanyl carrier protein.